The sequence spans 309 residues: 1,2-phenylacetyl-CoA epoxidase, subunit A (309 aa).

Residues R33, Q37, 103 to 106 (KYSS), N132, M193, 202 to 204 (SPN), K214, and N218 each bind substrate.

Forms a stable heterotetramer (dimer of heterodimers) with PaaC. The cofactor is Fe cation.

It catalyses the reaction phenylacetyl-CoA + NADPH + O2 + H(+) = 2-(1,2-epoxy-1,2-dihydrophenyl)acetyl-CoA + NADP(+) + H2O. It functions in the pathway aromatic compound metabolism; phenylacetate degradation. In terms of biological role, component of 1,2-phenylacetyl-CoA epoxidase multicomponent enzyme system which catalyzes the reduction of phenylacetyl-CoA (PA-CoA) to form 1,2-epoxyphenylacetyl-CoA. The subunit A is the catalytic subunit involved in the incorporation of one atom of molecular oxygen into phenylacetyl-CoA. The polypeptide is 1,2-phenylacetyl-CoA epoxidase, subunit A (paaA) (Escherichia coli (strain K12)).